The primary structure comprises 433 residues: Glutamate-1-semialdehyde 2,1-aminomutase (433 aa).

Lysine 270 carries the post-translational modification N6-(pyridoxal phosphate)lysine.

Belongs to the class-III pyridoxal-phosphate-dependent aminotransferase family. HemL subfamily. As to quaternary structure, homodimer. Pyridoxal 5'-phosphate serves as cofactor.

It localises to the cytoplasm. It catalyses the reaction (S)-4-amino-5-oxopentanoate = 5-aminolevulinate. Its pathway is porphyrin-containing compound metabolism; protoporphyrin-IX biosynthesis; 5-aminolevulinate from L-glutamyl-tRNA(Glu): step 2/2. The chain is Glutamate-1-semialdehyde 2,1-aminomutase from Clostridium novyi (strain NT).